Here is a 39-residue protein sequence, read N- to C-terminus: Photosystem II reaction center protein Psb30 (39 aa).

Residues 12–32 traverse the membrane as a helical segment; that stretch reads IFQLTFVGLIVIAGPIVIAVL.

It belongs to the Psb30/Ycf12 family. PSII is composed of 1 copy each of membrane proteins PsbA, PsbB, PsbC, PsbD, PsbE, PsbF, PsbH, PsbI, PsbJ, PsbK, PsbL, PsbM, PsbT, PsbX, PsbY, PsbZ, Psb30/Ycf12, peripheral proteins PsbO, CyanoQ (PsbQ), PsbU, PsbV and a large number of cofactors. It forms dimeric complexes.

The protein localises to the cellular thylakoid membrane. In terms of biological role, a core subunit of photosystem II (PSII), probably helps stabilize the reaction center. The chain is Photosystem II reaction center protein Psb30 from Crocosphaera subtropica (strain ATCC 51142 / BH68) (Cyanothece sp. (strain ATCC 51142)).